We begin with the raw amino-acid sequence, 446 residues long: tRNA modification GTPase MnmE (446 aa).

Residues Arg-24, Glu-81, and Lys-120 each contribute to the (6S)-5-formyl-5,6,7,8-tetrahydrofolate site. Residues 216-368 form the TrmE-type G domain; it reads GLHAVLIGPP…LHIRLRELAL (153 aa). K(+) is bound at residue Asn-226. GTP contacts are provided by residues 226–231, 245–251, and 270–273; these read NAGKSS, TDVAGTT, and DTAG. Position 230 (Ser-230) interacts with Mg(2+). Positions 245, 247, and 250 each coordinate K(+). A Mg(2+)-binding site is contributed by Thr-251. A (6S)-5-formyl-5,6,7,8-tetrahydrofolate-binding site is contributed by Lys-446.

Belongs to the TRAFAC class TrmE-Era-EngA-EngB-Septin-like GTPase superfamily. TrmE GTPase family. As to quaternary structure, homodimer. Heterotetramer of two MnmE and two MnmG subunits. K(+) serves as cofactor.

The protein resides in the cytoplasm. Its function is as follows. Exhibits a very high intrinsic GTPase hydrolysis rate. Involved in the addition of a carboxymethylaminomethyl (cmnm) group at the wobble position (U34) of certain tRNAs, forming tRNA-cmnm(5)s(2)U34. The polypeptide is tRNA modification GTPase MnmE (Xanthomonas oryzae pv. oryzae (strain KACC10331 / KXO85)).